The primary structure comprises 237 residues: Ribose-5-phosphate isomerase A (237 aa).

Substrate contacts are provided by residues 33–36, 90–93, and 103–106; these read TGST, DGAD, and KGGG. Glu112 (proton acceptor) is an active-site residue. Position 130 (Lys130) interacts with substrate.

Belongs to the ribose 5-phosphate isomerase family. As to quaternary structure, homodimer.

The catalysed reaction is aldehydo-D-ribose 5-phosphate = D-ribulose 5-phosphate. It participates in carbohydrate degradation; pentose phosphate pathway; D-ribose 5-phosphate from D-ribulose 5-phosphate (non-oxidative stage): step 1/1. In terms of biological role, catalyzes the reversible conversion of ribose-5-phosphate to ribulose 5-phosphate. In Trichodesmium erythraeum (strain IMS101), this protein is Ribose-5-phosphate isomerase A.